Reading from the N-terminus, the 96-residue chain is Large ribosomal subunit protein bL27 (96 aa).

A propeptide spanning residues 1 to 9 is cleaved from the precursor; that stretch reads MLNMNLQLL.

Belongs to the bacterial ribosomal protein bL27 family. In terms of processing, the N-terminus is cleaved by ribosomal processing cysteine protease Prp.

The sequence is that of Large ribosomal subunit protein bL27 from Clostridioides difficile (strain 630) (Peptoclostridium difficile).